We begin with the raw amino-acid sequence, 417 residues long: NADH-quinone oxidoreductase subunit D (417 aa).

Belongs to the complex I 49 kDa subunit family. NDH-1 is composed of 14 different subunits. Subunits NuoB, C, D, E, F, and G constitute the peripheral sector of the complex.

It localises to the cell inner membrane. The catalysed reaction is a quinone + NADH + 5 H(+)(in) = a quinol + NAD(+) + 4 H(+)(out). In terms of biological role, NDH-1 shuttles electrons from NADH, via FMN and iron-sulfur (Fe-S) centers, to quinones in the respiratory chain. The immediate electron acceptor for the enzyme in this species is believed to be ubiquinone. Couples the redox reaction to proton translocation (for every two electrons transferred, four hydrogen ions are translocated across the cytoplasmic membrane), and thus conserves the redox energy in a proton gradient. The sequence is that of NADH-quinone oxidoreductase subunit D from Ralstonia pickettii (strain 12J).